We begin with the raw amino-acid sequence, 150 residues long: Sec-independent protein translocase protein TatB (150 aa).

The chain crosses the membrane as a helical span at residues 1–21 (MFDLSWSEIALVGVVALIVIG). Residues 77–86 (KIDQAIDPDG) show a composition bias toward basic and acidic residues. The tract at residues 77-150 (KIDQAIDPDG…RTDGSLPPQD (74 aa)) is disordered. Residues 109–135 (AAPPSLPPQAPAQPVPPATGAAPPSPS) are compositionally biased toward pro residues.

The protein belongs to the TatB family. In terms of assembly, the Tat system comprises two distinct complexes: a TatABC complex, containing multiple copies of TatA, TatB and TatC subunits, and a separate TatA complex, containing only TatA subunits. Substrates initially bind to the TatABC complex, which probably triggers association of the separate TatA complex to form the active translocon.

Its subcellular location is the cell inner membrane. Functionally, part of the twin-arginine translocation (Tat) system that transports large folded proteins containing a characteristic twin-arginine motif in their signal peptide across membranes. Together with TatC, TatB is part of a receptor directly interacting with Tat signal peptides. TatB may form an oligomeric binding site that transiently accommodates folded Tat precursor proteins before their translocation. The chain is Sec-independent protein translocase protein TatB from Rhodospirillum rubrum (strain ATCC 11170 / ATH 1.1.1 / DSM 467 / LMG 4362 / NCIMB 8255 / S1).